The sequence spans 410 residues: PHAF1 protein At3g51130 (410 aa).

Belongs to the PHAF1 family.

The polypeptide is PHAF1 protein At3g51130 (Arabidopsis thaliana (Mouse-ear cress)).